Here is a 278-residue protein sequence, read N- to C-terminus: Rhomboid protease GlpG (278 aa).

Transmembrane regions (helical) follow at residues 94-114 (AGPLTLSVMVLCIAIYILMLI), 143-163 (AFLHFSLLHILFNLMWWWYLG), 175-195 (LLVLTIVSAVFSGWGQSLFSG), 196-216 (ANFGGLSGVVYALMGYVWLTG), 224-241 (ISLPRGLMAFSVLWLIAG), and 245-267 (ILGLSIANAAHVSGLIIGLLMAF). The active-site Nucleophile is the serine 202. Histidine 255 is a catalytic residue.

This sequence belongs to the peptidase S54 family.

The protein localises to the cell inner membrane. The enzyme catalyses Cleaves type-1 transmembrane domains using a catalytic dyad composed of serine and histidine that are contributed by different transmembrane domains.. In terms of biological role, rhomboid-type serine protease that catalyzes intramembrane proteolysis. In Yersinia pseudotuberculosis serotype I (strain IP32953), this protein is Rhomboid protease GlpG.